Consider the following 153-residue polypeptide: Cofilin (153 aa).

Residues 4-148 (SGATVSQDCI…EYDSILKTVS (145 aa)) enclose the ADF-H domain.

It belongs to the actin-binding proteins ADF family.

The protein resides in the cytoplasm. The protein localises to the cytoskeleton. It localises to the nucleus matrix. Its function is as follows. Controls reversibly actin polymerization and depolymerization in a pH-sensitive manner. It has the ability to bind G- and F-actin in a 1:1 ratio of cofilin to actin. Binding to F-actin is regulated by tropomyosin. It is the major component of intranuclear and cytoplasmic actin rods. Required for accumulation of actin at the cell division site via depolymerizing actin at the cell ends. In association with myosin II has a role in the assembly of the contractile ring via severing actin filaments. Involved in the maintenance of the contractile ring once formed. In association with profilin and capping protein, has a role in the mitotic reorganization of the actin cytoskeleton. The polypeptide is Cofilin (COF1) (Gibberella zeae (strain ATCC MYA-4620 / CBS 123657 / FGSC 9075 / NRRL 31084 / PH-1) (Wheat head blight fungus)).